The sequence spans 368 residues: Agmatine deiminase (368 aa).

Catalysis depends on C357, which acts as the Amidino-cysteine intermediate.

The protein belongs to the agmatine deiminase family. Homodimer.

The enzyme catalyses agmatine + H2O = N-carbamoylputrescine + NH4(+). Its pathway is amine and polyamine biosynthesis; putrescine biosynthesis via agmatine pathway; N-carbamoylputrescine from agmatine: step 1/1. Its function is as follows. Mediates the hydrolysis of agmatine into N-carbamoylputrescine in the arginine decarboxylase (ADC) pathway of putrescine biosynthesis, a basic polyamine. This chain is Agmatine deiminase, found in Pseudomonas aeruginosa (strain LESB58).